We begin with the raw amino-acid sequence, 356 residues long: sn-glycerol-3-phosphate import ATP-binding protein UgpC (356 aa).

The 232-residue stretch at 4–235 (LKLQAVTKSW…PASLFVASFI (232 aa)) folds into the ABC transporter domain. 37-44 (GPSGCGKS) serves as a coordination point for ATP.

It belongs to the ABC transporter superfamily. sn-glycerol-3-phosphate importer (TC 3.A.1.1.3) family. In terms of assembly, the complex is composed of two ATP-binding proteins (UgpC), two transmembrane proteins (UgpA and UgpE) and a solute-binding protein (UgpB).

It localises to the cell inner membrane. It carries out the reaction sn-glycerol 3-phosphate(out) + ATP + H2O = sn-glycerol 3-phosphate(in) + ADP + phosphate + H(+). In terms of biological role, part of the ABC transporter complex UgpBAEC involved in sn-glycerol-3-phosphate (G3P) import. Responsible for energy coupling to the transport system. The polypeptide is sn-glycerol-3-phosphate import ATP-binding protein UgpC (Escherichia coli (strain UTI89 / UPEC)).